We begin with the raw amino-acid sequence, 446 residues long: Probable beta-1,4-xylosyltransferase IRX9L (446 aa).

Positions M1–S26 are disordered. The Cytoplasmic portion of the chain corresponds to M1–R85. Residues A86–F106 form a helical; Signal-anchor for type II membrane protein membrane-spanning segment. Residues S107–T446 lie on the Lumenal side of the membrane. Residues N185, N258, N361, and N411 are each glycosylated (N-linked (GlcNAc...) asparagine).

Belongs to the glycosyltransferase 43 family.

It localises to the golgi apparatus membrane. Probable beta-1,4-xylosyltransferase involved in xylan biosynthesis in cell walls. The polypeptide is Probable beta-1,4-xylosyltransferase IRX9L (Oryza sativa subsp. japonica (Rice)).